The primary structure comprises 105 residues: MKLLFEGLLVLVLIAFVVAEFESDAEKWEALITQERACKGEGVKGCYYEADDWCCKKTPCKCPAWSHERECRCTQPCNPSCRGKRALMVDPETHRMLSLHRLSEE.

The first 19 residues, 1–19 (MKLLFEGLLVLVLIAFVVA), serve as a signal peptide directing secretion. A propeptide spanning residues 20 to 36 (EFESDAEKWEALITQER) is cleaved from the precursor. 4 cysteine pairs are disulfide-bonded: C38–C55, C46–C60, C54–C73, and C62–C71. R82 is modified (arginine amide). A propeptide spanning residues 86–105 (ALMVDPETHRMLSLHRLSEE) is cleaved from the precursor.

It belongs to the neurotoxin 28 (Litx) family. In terms of tissue distribution, expressed by the venom gland.

It localises to the secreted. Toxin active against insects (S.frugiperda larvae). May act on sodium (Nav) or calcium (Cav) channels. The polypeptide is U1-sicaritoxin-Li1b (Loxosceles intermedia (Brown spider)).